Reading from the N-terminus, the 154-residue chain is Transcriptional repressor NrdR (154 aa).

A zinc finger lies at 3–34 (CPFCGANDTKVIDSRLVAEGEQVRRRRECLAC). Positions 49–139 (PRLIKQDGSR…VYRRFQDLNE (91 aa)) constitute an ATP-cone domain.

Belongs to the NrdR family. Requires Zn(2+) as cofactor.

Negatively regulates transcription of bacterial ribonucleotide reductase nrd genes and operons by binding to NrdR-boxes. The polypeptide is Transcriptional repressor NrdR (Pseudomonas syringae pv. tomato (strain ATCC BAA-871 / DC3000)).